We begin with the raw amino-acid sequence, 75 residues long: U6-lycotoxin-Ls1d (75 aa).

The N-terminal stretch at 1-21 (MKLLFFTALVLVVISLIEVEA) is a signal peptide. The propeptide occupies 22–25 (ENER).

The protein belongs to the neurotoxin 19 (CSTX) family. 06 (U6-Lctx) subfamily. Post-translationally, contains 4 disulfide bonds. In terms of tissue distribution, expressed by the venom gland.

The protein resides in the secreted. This Lycosa singoriensis (Wolf spider) protein is U6-lycotoxin-Ls1d.